Here is a 228-residue protein sequence, read N- to C-terminus: Glucose-induced degradation protein 8-A homolog (228 aa).

A LisH domain is found at 25 to 57 (QRADMNRLIMNYLVTEGFKEAAEKFRMESGIEP). One can recognise a CTLH domain in the interval 63–120 (SLDERIKIREMVLKGQIQEAIALINSLHPELLDTNRYLYFHLQQQHLIELIRLRETEA).

This sequence belongs to the GID8 family. Identified in the CTLH complex that contains at least MAEA, RMND5A (or alternatively its paralog RMND5B), GID8, WDR26, and RANBP9 and/or RANBP10. Interacts with CTNNB1.

In terms of biological role, core component of the CTLH E3 ubiquitin-protein ligase complex that selectively accepts ubiquitin from UBE2H and mediates ubiquitination and subsequent proteasomal degradation of target proteins. Acts as a positive regulator of Wnt signaling pathway by promoting beta-catenin (CTNNB1) nuclear accumulation. Required for normal Wnt signaling and normal dorsoventral patterning during embryogenesis. The sequence is that of Glucose-induced degradation protein 8-A homolog (gid8a) from Danio rerio (Zebrafish).